The sequence spans 469 residues: Argininosuccinate lyase (469 aa).

Belongs to the lyase 1 family. Argininosuccinate lyase subfamily.

Its subcellular location is the cytoplasm. It carries out the reaction 2-(N(omega)-L-arginino)succinate = fumarate + L-arginine. It functions in the pathway amino-acid biosynthesis; L-arginine biosynthesis; L-arginine from L-ornithine and carbamoyl phosphate: step 3/3. This is Argininosuccinate lyase from Burkholderia multivorans (strain ATCC 17616 / 249).